A 1941-amino-acid chain; its full sequence is MAEPQKSSKVAIKKMEDDLPPPPIPDSIQVIAPASQDPNPLPVPPPKQAFSKFYQQRQVNELKRLYRHMHPELRKNLEEAVTEDLAEMLNTEDPNAQGSVNLDKVLPGEVQSMRWIFENWALDSIGDHQATKKMMEDEIIPGGDVKSTSLRFENQSVNGDYLSTTAKVSETDLARGDVHTARWLFETQPLDSLNKLYSDETEMQEAVLKEPVQGGDVKGAKELFEAQSLDAIGRCCSVEEKSILQLKSEIQELKGDVKKTIRLFQTEPLCAIRDKTGNIHEIKSVCREEIQSNAVRTARWLFETQPLDTINKDTSKVQIIRGISLEEIGRPDVSGARWIFETQPLDAIREITVEEQDFKASTDFVTGADVTKQRLLFGTQALDSLKGEASESVAAKEQVIGGDVKSTLWLFETQPMETLKDNVEVGHLKKVELSAEEKGDVKQRKHVFETCPLGSISKAFEEEISAASTEEVVKGDVKSFKTLFETLPLDSIKEVDAEPITKEEEKIPPGNVKANQILFETTPLYAIKDSFGNFHEVTSVSREQVISGDVKKYKWMFETRPLDQFDESTKKVDIIRGITKQEVVAGDVRTAKWLFETQPMDVIHHQATQGEEHPSMKREISQRGDVKTCRWLFETQPMHTLYEKAEKKQEEDVSVPQADVKSYTWMFETQPLDSLKGQEEQYLRVSKAYSQDELQGVDVKTVRHLFETEPLGSSVVSEADQKKTLRYSSRVEIQSGEVSRVKEFFEAKPLDTTTKPTAVIKDDGTIEAGSVHKFTWLFENYPMDTLKDSSEGIQEIPPEKDIKGGDVGGKRFIFETYSLDQIHDKVDETELHKIQKDTMSKANVKSCTMLFESQPLYAIQDKEGGYHEVTSVQKEEIMKGDVKGARWLFETKPLDQIKKEEEVFVIRAVTQEDIKKGDVQAARWRFETEPLDSFPGGKISVPRTVDDVQKGDVQSNKQLFESQQVGQKKYVRMVSVSDVQRGDVRTSTWLFENQPVDSLYGDADRSSSISTVQREDSQKGDVKRCTWLFETQPMDTLKDPEVTVSTGTQEPIPRADVKSTTWLFESTPLDKFSASECSRETELKERTMRETLETLCTCQAIQHDGILIEANDTESVKMVKYQLSSPGAPEILKEEIVRGHLQGIMLQLLHRTNVEPQSVLVEEDREGKIKVSSLQLLDQSEAIKGKEDLSGNVAKALQSLLSQDASIKKGMVIQETKSESVKMTLYSLLFHSVQQKVVKGDVKSTIGNLMASSQEQRATVTVKREDNEKGNVQLFASCIEKGDLDYLKNLQQESEIQSLISAQAEQGAAESAPRALQSTNTHVLANKEQVEKVMAEAKSGALEGAKMVFACESTGKEGALEREVVHAVGVTGTTVQCLGKPQNLPTGMEKEEIMSGGLKVTTKSIQRVADVSKNTEKEESISACLKEPKATMQGIAQAKVTAERNEVVGEQQSLVTEQASQKQSEEKVLGNDLQAAMQSLRLATAEARNIQHHVQSKLQRNREEVHMACRQQVASKQETKTLQSTIHQQESASTMRENTSTAIRTSTTRVQEASRTHTSVSQKSIASHKKVSASEEVQGGQLLSQENQVVPSRDVSIKDGLYTATPVKTYINPFVESDYKEQSVQEERDVIIRGDVQTAIRALQSAATEQRLVEKEDIVRGNLKATLQSLEKSNVNVSKGDFKAAMIYRNAGQSYSVCKKKSETQVNNNQTAVVASGSQADNDFPPPPPVAVMKAEHCPPSTKATREGAPPLLTSKDEAPGCFSPLQTPLPPPPSLSCKPSDQNSTEKPKIPPKPEITAPLRKKPVPPPKPEHLLHEAYSASTNNSTNRSTKSVPPPVPPKPPGLREISMPKPPPAELQLSCTEVCEQSDHRESQDKCCTLESSMDKSITVHGPERKLPKYTAKTPLQMAEERYKARKGGQGKFELDRAKPSKPVKNGEVG.

Residues 1–41 (MAEPQKSSKVAIKKMEDDLPPPPIPDSIQVIAPASQDPNPL) are disordered. Xin repeat units follow at residues 108 to 123 (GEVQ…WALD), 143 to 158 (GDVK…QSVN), 176 to 191 (GDVH…QPLD), 215 to 230 (GDVK…QSLD), 255 to 270 (GDVK…EPLC), 293 to 308 (NAVR…QPLD), 331 to 346 (PDVS…QPLD), 368 to 383 (ADVT…QALD), 402 to 417 (GDVK…QPME), 439 to 454 (GDVK…CPLG), 475 to 490 (GDVK…LPLD), 510 to 525 (GNVK…TPLY), 548 to 563 (GDVK…RPLD), 586 to 601 (GDVR…QPMD), 624 to 639 (GDVK…QPMH), 658 to 673 (ADVK…QPLD), 697 to 712 (VDVK…EPLG), 736 to 751 (GEVS…KPLD), 769 to 784 (GSVH…YPMD), 805 to 820 (GDVG…YSLD), 842 to 857 (ANVK…QPLY), 880 to 895 (GDVK…KPLD), 917 to 932 (GDVQ…EPLD), 951 to 966 (GDVQ…QQVG), 982 to 997 (GDVR…QPVD), 1020 to 1035 (GDVK…QPMD), and 1055 to 1070 (ADVK…TPLD). Polar residues predominate over residues 1514 to 1565 (ASKQETKTLQSTIHQQESASTMRENTSTAIRTSTTRVQEASRTHTSVSQKSI). Disordered stretches follow at residues 1514–1568 (ASKQ…IASH), 1715–1856 (ASGS…PPPA), and 1914–1941 (YKAR…GEVG). Residues 1820–1833 (SASTNNSTNRSTKS) are compositionally biased toward low complexity. The span at 1834 to 1843 (VPPPVPPKPP) shows a compositional bias: pro residues.

This sequence belongs to the Xin family. As to expression, expressed at intercalated disks in the heart (at protein level).

Its subcellular location is the cell junction. The protein localises to the adherens junction. The protein resides in the desmosome. Involved in cardiac morphogenesis, including heart midline formation, cardiac tubule looping, myocardial formation and maintenance of heart beat speed and rhythm. May protect actin filaments from depolymerization. May play a role in development of normal skeletal muscle morphology, muscle fiber type composition and regulation of muscle satellite cell activation and survival. In Gallus gallus (Chicken), this protein is Xin actin-binding repeat-containing protein 1.